Here is a 570-residue protein sequence, read N- to C-terminus: MGNWAVNEGLSIFVILVWLGLNVFLFVWYYRVYDIPPKFFYTRKLLGSALALARAPAACLNFNCMLILLPVCRNLLSFLRGSSACCSTRVRRQLDRNLTFHKMVAWMIALHSAIHTIAHLFNVEWCVNARVNNSDPYSVALSELGDRQNESYLNFARKRIKNPEGGLYLAVTLLAGITGVVITLCLILIITSSTKTIRRSYFEVFWYTHHLFVIFFIGLAIHGAERIVRGQTAESLAVHNITVCEQKISEWGKIKECPIPQFAGNPPMTWKWIVGPMFLYLCERLVRFWRSQQKVVITKVVTHPFKTIELQMKKKGFKMEVGQYIFVKCPKVSKLEWHPFTLTSAPEEDFFSIHIRIVGDWTEGLFNACGCDKQEFQDAWKLPKIAVDGPFGTASEDVFSYEVVMLVGAGIGVTPFASILKSVWYKYCNNATNLKLKKIYFYWLCRDTHAFEWFADLLQLLESQMQERNNAGFLSYNIYLTGWDESQANHFAVHHDEEKDVITGLKQKTLYGRPNWDNEFKTIASQHPNTRIGVFLCGPEALAETLSKQSISNSESGPRGVHFIFNKENF.

The Cytoplasmic segment spans residues 2–9; it reads GNWAVNEG. A helical membrane pass occupies residues 10–36; sequence LSIFVILVWLGLNVFLFVWYYRVYDIP. Over 37-46 the chain is Extracellular; the sequence is PKFFYTRKLL. The helical transmembrane segment at 47–72 threads the bilayer; it reads GSALALARAPAACLNFNCMLILLPVC. The Ferric oxidoreductase domain maps to 54–286; the sequence is RAPAACLNFN…MFLYLCERLV (233 aa). The Cytoplasmic portion of the chain corresponds to 73-95; that stretch reads RNLLSFLRGSSACCSTRVRRQLD. Residues 96–130 traverse the membrane as a helical segment; sequence RNLTFHKMVAWMIALHSAIHTIAHLFNVEWCVNAR. Heme b-binding residues include His-101 and His-115. At 131 to 163 the chain is on the extracellular side; it reads VNNSDPYSVALSELGDRQNESYLNFARKRIKNP. Asn-132 and Asn-149 each carry an N-linked (GlcNAc...) asparagine glycan. Residue Lys-161 forms a Glycyl lysine isopeptide (Lys-Gly) (interchain with G-Cter in ubiquitin) linkage. Residues 164-194 traverse the membrane as a helical segment; it reads EGGLYLAVTLLAGITGVVITLCLILIITSST. Residues 195-203 lie on the Cytoplasmic side of the membrane; the sequence is KTIRRSYFE. Positions 199 and 200 each coordinate FAD. A helical transmembrane segment spans residues 204-222; it reads VFWYTHHLFVIFFIGLAIH. Heme b is bound by residues Trp-206, His-209, His-222, Arg-226, and Ile-227. Residues 223–267 lie on the Extracellular side of the membrane; sequence GAERIVRGQTAESLAVHNITVCEQKISEWGKIKECPIPQFAGNPP. An N-linked (GlcNAc...) asparagine glycan is attached at Asn-240. Lys-255 is covalently cross-linked (Glycyl lysine isopeptide (Lys-Gly) (interchain with G-Cter in ubiquitin)). Heme b-binding residues include Met-268, Tyr-280, and Arg-287. Residues 268 to 285 traverse the membrane as a helical segment; that stretch reads MTWKWIVGPMFLYLCERL. At 286–570 the chain is on the cytoplasmic side; the sequence is VRFWRSQQKV…VHFIFNKENF (285 aa). Residues 287–397 enclose the FAD-binding FR-type domain; that stretch reads RFWRSQQKVV…DGPFGTASED (111 aa). Residues Lys-294, Lys-299, Lys-306, Lys-328, and Lys-334 each participate in a glycyl lysine isopeptide (Lys-Gly) (interchain with G-Cter in ubiquitin) cross-link. FAD contacts are provided by Trp-337, His-338, Pro-339, Thr-341, His-354, Arg-356, Trp-361, and Thr-362. Lys-381 is covalently cross-linked (Glycyl lysine isopeptide (Lys-Gly) (interchain with G-Cter in ubiquitin)). 3 residues coordinate NADPH: Ile-411, Arg-446, and Thr-481. Residue Lys-506 forms a Glycyl lysine isopeptide (Lys-Gly) (interchain with G-Cter in ubiquitin) linkage. Arg-513 provides a ligand contact to NADPH. A Glycyl lysine isopeptide (Lys-Gly) (interchain with G-Cter in ubiquitin) cross-link involves residue Lys-567.

In terms of assembly, component of the phagocyte NADPH oxidase core complex/cytochrome b558 complex, composed of CYBB (heavy chain (beta)) and CYBA (light chain (alpha)). Component of the phagocyte NADPH oxidase complex composed of an obligatory core heterodimer formed by the membrane proteins CYBA and CYBB and the cytosolic regulatory subunits NCF1/p47-phox, NCF2/p67-phox, NCF4/p40-phox and the small GTPase RAC1 or RAC2. Interacts with NCF1 (phosphorylated form). Interacts with NCF2; the interaction is enhanced in the presence of GBP7. Interacts with RAC2. Interacts with RAC1. Interacts with calprotectin (S100A8/9). Interacts with NRROS; the interaction is direct and impairs formation of a stable NADPH oxidase complex. Interacts with CYBC1; CYBC1 may act as a chaperone stabilizing Cytochrome b-245 heterodimer. The CYBA-CYBB complex interacts with GBP7. FAD serves as cofactor. Post-translationally, glycosylated. In terms of processing, phosphorylated on Ser and Thr residues by PKC during neutrophils activation. Phosphorylation enhances the NADPH oxidase activity and stimulates its interaction with RAC2, NCF2/p67-phox, and NCF1/p47-phox. Undergoes 'Lys-48'-linked polyubiquitination, likely by RNF145, triggering endoplasmic reticulum-associated degradation. As to expression, detected in neutrophils (at protein level).

It localises to the cell membrane. It catalyses the reaction NADPH + 2 O2 = 2 superoxide + NADP(+) + H(+). Its function is as follows. Catalytic subunit of the phagocyte NADPH oxidase complex that mediates the transfer of electrons from cytosolic NADPH to O2 to produce the superoxide anion (O2(-)). In the activated complex, electrons are first transferred from NADPH to flavin adenine dinucleotide (FAD) and subsequently transferred via two heme molecules to molecular oxygen, producing superoxide through an outer-sphere reaction. Activation of the NADPH oxidase complex is initiated by the assembly of cytosolic subunits of the NADPH oxidase complex with the core NADPH oxidase complex to form a complex at the plasma membrane or phagosomal membrane. This activation process is initiated by phosphorylation dependent binding of the cytosolic NCF1/p47-phox subunit to the C-terminus of CYBA/p22-phox. NADPH oxidase complex assembly is impaired through interaction with NRROS. This is NADPH oxidase 2 from Homo sapiens (Human).